The chain runs to 71 residues: Small ribosomal subunit protein bS21 (71 aa).

This sequence belongs to the bacterial ribosomal protein bS21 family.

This Acinetobacter baylyi (strain ATCC 33305 / BD413 / ADP1) protein is Small ribosomal subunit protein bS21.